Consider the following 214-residue polypeptide: MTEINFRNAQFLISAPSLRECPAEEGAEVAFAGRSNAGKSSAINCLTNNGKLARTSKTPGRTQLINFFSLGQGAQQRLVDLPGYGYAKVPLATKREWQAHLSEYLYKRKCLRGLVLLMDIRHPMQEFDTMMLNWAVDANMPVHLLLTKSDKLKRGAANNTLLQVNRSLKESGVQDLVSAQIFSSLKNVGVQQLEQVITGWLNLPAGEDEASVKN.

The region spanning 25-203 (EGAEVAFAGR…EQVITGWLNL (179 aa)) is the EngB-type G domain. GTP is bound by residues 33 to 40 (GRSNAGKS), 60 to 64 (GRTQL), 80 to 83 (DLPG), 147 to 150 (TKSD), and 182 to 184 (FSS). Residues S40 and T62 each contribute to the Mg(2+) site.

Belongs to the TRAFAC class TrmE-Era-EngA-EngB-Septin-like GTPase superfamily. EngB GTPase family. Mg(2+) serves as cofactor.

In terms of biological role, necessary for normal cell division and for the maintenance of normal septation. This is Probable GTP-binding protein EngB from Teredinibacter turnerae (strain ATCC 39867 / T7901).